Here is a 396-residue protein sequence, read N- to C-terminus: Inositol hexakisphosphate kinase 3 (396 aa).

206-214 (PCILDLKMG) provides a ligand contact to substrate.

The protein belongs to the inositol phosphokinase (IPK) family. Highly expressed in cerebellum, brain cortex, kidney, thymus and lung. Detected at lower levels in hippocampus, testis, heart and olfactory bulb.

The protein resides in the cytoplasm. It catalyses the reaction 1D-myo-inositol hexakisphosphate + ATP = 5-diphospho-1D-myo-inositol 1,2,3,4,6-pentakisphosphate + ADP. The catalysed reaction is 1-diphospho-1D-myo-inositol 2,3,4,5,6-pentakisphosphate + ATP + H(+) = 1,5-bis(diphospho)-1D-myo-inositol 2,3,4,6-tetrakisphosphate + ADP. In terms of biological role, converts inositol hexakisphosphate (InsP6) to diphosphoinositol pentakisphosphate (InsP7/PP-InsP5). Converts 1,3,4,5,6-pentakisphosphate (InsP5) to PP-InsP4. In Mus musculus (Mouse), this protein is Inositol hexakisphosphate kinase 3 (Ip6k3).